The chain runs to 308 residues: MQCTICHRPSTVWYCAHCVNTSPKLILRYKLELTQICEEVTEMRDIVTSTLENAISEKEGLLGKHMERLQHLRLKRYNARLSHRARELEQHLDSKLSRRDGLRRALKQLSPDVAVVPAEDPDEYRELRHKLTLLQNVVSMKSTQKFEELCQWFVFTCSTTEDDHFPYSIRFIPVCNIRNWRLLSTAQESLQHMCEFVIYASRALLVDIPFGSHSEKLTTDHIAAVSHFTVNLLTILIKRKRLQERPDVPDLLGRYDIDGLLYLLCSGGDVESITGTCPPTYKVVHEFVRTALEDGDQSEERGHWMVLE.

The cysteine repeats stretch occupies residues 3–18; that stretch reads CTICHRPSTVWYCAHC. Residues 73 to 109 are a coiled coil; that stretch reads RLKRYNARLSHRARELEQHLDSKLSRRDGLRRALKQL.

It belongs to the ATG14 family.

The protein resides in the preautophagosomal structure membrane. Its subcellular location is the vacuole membrane. Its function is as follows. Required for cytoplasm to vacuole transport (Cvt) and autophagy as a part of the autophagy-specific VPS34 PI3-kinase complex I. This complex is essential to recruit the ATG8-phosphatidylinositol conjugate and the ATG12-ATG5 conjugate to the pre-autophagosomal structure. ATG14 mediates the specific binding of the VPS34 PI3-kinase complex I to the preautophagosomal structure (PAS). The sequence is that of Autophagy-related protein 14 (ATG14) from Eremothecium gossypii (strain ATCC 10895 / CBS 109.51 / FGSC 9923 / NRRL Y-1056) (Yeast).